Here is a 510-residue protein sequence, read N- to C-terminus: NAD(P)H-quinone oxidoreductase subunit 2, chloroplastic (510 aa).

Transmembrane regions (helical) follow at residues 26-46 (LFDG…ILLL), 57-77 (IPWL…ALLF), 99-119 (IFQV…VEYI), 124-144 (MAIT…MFLC), 149-169 (LITI…LSGY), 184-204 (LLMG…LYGL), 227-247 (PGIS…LSPA), 295-315 (WHLL…LIAI), 323-343 (MLAY…IVGD), 354-374 (YMLF…LFGL), 395-415 (ALSL…AGFF), 418-438 (LYLF…IALV), and 484-504 (MIVC…IIAI).

It belongs to the complex I subunit 2 family. As to quaternary structure, NDH is composed of at least 16 different subunits, 5 of which are encoded in the nucleus.

It is found in the plastid. Its subcellular location is the chloroplast thylakoid membrane. The enzyme catalyses a plastoquinone + NADH + (n+1) H(+)(in) = a plastoquinol + NAD(+) + n H(+)(out). It carries out the reaction a plastoquinone + NADPH + (n+1) H(+)(in) = a plastoquinol + NADP(+) + n H(+)(out). In terms of biological role, NDH shuttles electrons from NAD(P)H:plastoquinone, via FMN and iron-sulfur (Fe-S) centers, to quinones in the photosynthetic chain and possibly in a chloroplast respiratory chain. The immediate electron acceptor for the enzyme in this species is believed to be plastoquinone. Couples the redox reaction to proton translocation, and thus conserves the redox energy in a proton gradient. This is NAD(P)H-quinone oxidoreductase subunit 2, chloroplastic from Trachelium caeruleum (Blue throatwort).